A 338-amino-acid polypeptide reads, in one-letter code: Phytanoyl-CoA dioxygenase, peroxisomal (338 aa).

Residues 1–30 (MNLTRAGARLQVLLGHLGRPSAPTIVAQPV) constitute a peroxisome transit peptide. An N6-succinyllysine mark is found at K59 and K108. 2-oxoglutarate contacts are provided by residues K120, M157, 175–177 (HQD), and W193. Fe cation-binding residues include H175 and D177. 2 positions are modified to N6-succinyllysine: K231 and K252. H264 serves as a coordination point for Fe cation. 2 residues coordinate 2-oxoglutarate: S266 and R275.

Belongs to the PhyH family. As to quaternary structure, interacts with FKBP52. Interacts with PHYHIP. Requires Fe cation as cofactor. L-ascorbate is required as a cofactor. ATP serves as cofactor. The cofactor is Mg(2+). Ubiquitously expressed in all tissues with significant levels detected in the embryonic and neonatal heart and liver. In the adult, significant levels are detected in the liver, kidney, heart, gut, brain and aorta.

The protein localises to the peroxisome. It catalyses the reaction phytanoyl-CoA + 2-oxoglutarate + O2 = 2-hydroxyphytanoyl-CoA + succinate + CO2. The enzyme catalyses 3-methylhexadecanoyl-CoA + 2-oxoglutarate + O2 = 2-hydroxy-3-methylhexadecanoyl-CoA + succinate + CO2. It carries out the reaction hexadecanoyl-CoA + 2-oxoglutarate + O2 = 2-hydroxyhexadecanoyl-CoA + succinate + CO2. The catalysed reaction is octanoyl-CoA + 2-oxoglutarate + O2 = 2-hydroxyoctanoyl-CoA + succinate + CO2. It catalyses the reaction decanoyl-CoA + 2-oxoglutarate + O2 = 2-hydroxydecanoyl-CoA + succinate + CO2. The enzyme catalyses 3-methylbutanoyl-CoA + 2-oxoglutarate + O2 = 2-hydroxy-3-methylbutanoyl-CoA + succinate + CO2. It carries out the reaction heptadecanoyl-CoA + 2-oxoglutarate + O2 = 2-hydroxyheptadecanoyl-CoA + succinate + CO2. The catalysed reaction is eicosanoyl-CoA + 2-oxoglutarate + O2 = 2-hydroxyeicosanoyl-CoA + succinate + CO2. It catalyses the reaction octadecanoyl-CoA + 2-oxoglutarate + O2 = 2-hydroxyoctadecanoyl-CoA + succinate + CO2. The enzyme catalyses dodecanoyl-CoA + 2-oxoglutarate + O2 = 2-hydroxydodecanoyl-CoA + succinate + CO2. It carries out the reaction tetradecanoyl-CoA + 2-oxoglutarate + O2 = 2-hydroxytetradecanoyl-CoA + succinate + CO2. The catalysed reaction is hexanoyl-CoA + 2-oxoglutarate + O2 = 2-hydroxyhexanoyl-CoA + succinate + CO2. It catalyses the reaction butanoyl-CoA + 2-oxoglutarate + O2 = 2-hydroxybutanoyl-CoA + succinate + CO2. The enzyme catalyses 3-methylnonanoyl-CoA + 2-oxoglutarate + O2 = 2-hydroxy-3-methylnonanoyl-CoA + succinate + CO2. It carries out the reaction 3-methylundecanoyl-CoA + 2-oxoglutarate + O2 = 2-hydroxy-3-methylundecanoyl-CoA + succinate + CO2. The catalysed reaction is 3-methyldodecanoyl-CoA + 2-oxoglutarate + O2 = 2-hydroxy-3-methyldodecanoyl-CoA + succinate + CO2. Its pathway is lipid metabolism; fatty acid metabolism. Functionally, catalyzes the 2-hydroxylation of not only racemic phytanoyl-CoA and the isomers of 3-methylhexadecanoyl-CoA, but also a variety of other mono-branched 3-methylacyl-CoA esters (with a chain length of at least seven carbon atoms) and straight-chain acyl-CoA esters (with a chain length longer than four carbon atoms). Does not hydroxylate long and very long straight chain acyl-CoAs or 2-methyl-and 4-methyl-branched acyl-CoAs. In Mus musculus (Mouse), this protein is Phytanoyl-CoA dioxygenase, peroxisomal (Phyh).